The sequence spans 549 residues: Tegument protein (549 aa).

Disordered regions lie at residues 50–92 (KKKA…TASP), 353–391 (ETGD…CSSY), and 523–542 (TPIK…TRSP). 2 stretches are compositionally biased toward polar residues: residues 75 to 84 (PQALSVPSLS) and 356 to 369 (DCSS…QTHR). Residues 523-534 (TPIKTTSSSSPR) are compositionally biased toward low complexity.

Functionally, this viral structural protein may have important functions, such as protein kinase activity, DNA binding, and possible transcriptional activation of immediate-early genes. The sequence is that of Tegument protein from Homo sapiens (Human).